The chain runs to 177 residues: Large ribosomal subunit protein uL6 (177 aa).

This sequence belongs to the universal ribosomal protein uL6 family. As to quaternary structure, part of the 50S ribosomal subunit.

Its function is as follows. This protein binds to the 23S rRNA, and is important in its secondary structure. It is located near the subunit interface in the base of the L7/L12 stalk, and near the tRNA binding site of the peptidyltransferase center. This chain is Large ribosomal subunit protein uL6, found in Pseudomonas entomophila (strain L48).